The chain runs to 214 residues: Orotate phosphoribosyltransferase (214 aa).

Residue Lys-26 participates in 5-phospho-alpha-D-ribose 1-diphosphate binding. 34–35 (FF) is an orotate binding site. 5-phospho-alpha-D-ribose 1-diphosphate contacts are provided by residues 72-73 (YK), Arg-99, Lys-100, Lys-103, His-105, and 124-132 (DDVITAGTA). Orotate-binding residues include Thr-128 and Arg-157.

The protein belongs to the purine/pyrimidine phosphoribosyltransferase family. PyrE subfamily. In terms of assembly, homodimer. Requires Mg(2+) as cofactor.

It carries out the reaction orotidine 5'-phosphate + diphosphate = orotate + 5-phospho-alpha-D-ribose 1-diphosphate. The protein operates within pyrimidine metabolism; UMP biosynthesis via de novo pathway; UMP from orotate: step 1/2. Its function is as follows. Catalyzes the transfer of a ribosyl phosphate group from 5-phosphoribose 1-diphosphate to orotate, leading to the formation of orotidine monophosphate (OMP). The sequence is that of Orotate phosphoribosyltransferase from Pseudomonas fluorescens (strain Pf0-1).